The following is a 210-amino-acid chain: Adenylate kinase isoenzyme 1 (210 aa).

30-35 lines the ATP pocket; it reads GSGKGT. Residues 50–79 are NMP; that stretch reads SSGDLLRDEVKSGSPRGAQLTAIMESGALV. AMP is bound by residues Ser-51, Arg-56, 77–79, 107–110, and Gln-114; these read ALV and GYPR. The segment at 144–154 is LID; that stretch reads HRAQTSGRADD. Arg-145 provides a ligand contact to ATP. Positions 151 and 162 each coordinate AMP. Gly-190 lines the ATP pocket.

It belongs to the adenylate kinase family. AK1 subfamily. In terms of assembly, monomer.

It is found in the cytoplasm. The enzyme catalyses AMP + ATP = 2 ADP. In terms of biological role, catalyzes the reversible transfer of the terminal phosphate group between ATP and AMP. Plays an important role in cellular energy homeostasis and in adenine nucleotide metabolism. The chain is Adenylate kinase isoenzyme 1 from Caenorhabditis elegans.